A 61-amino-acid polypeptide reads, in one-letter code: Metallothionein-1A (61 aa).

N-acetylmethionine is present on M1. Residues 1–29 form a beta region; that stretch reads MDPNCSCATGGSCTCTGSCKCKECKCTSC. The a divalent metal cation site is built by C5, C7, C13, C15, C19, C21, C24, C26, C29, C33, C34, C36, C37, C41, C44, C48, C50, and C57. The interval 30-61 is alpha; sequence KKSCCSCCPMSCAKCAQGCICKGASEKCSCCA. Position 58 is a phosphoserine (S58). Residues C59 and C60 each coordinate a divalent metal cation.

This sequence belongs to the metallothionein superfamily. Type 1 family. As to quaternary structure, monomer.

Metallothioneins have a high content of cysteine residues that bind various heavy metals; these proteins are transcriptionally regulated by both heavy metals and glucocorticoids. The protein is Metallothionein-1A (MT1A) of Homo sapiens (Human).